The following is a 270-amino-acid chain: Phosphatidylinositol transfer protein alpha isoform (270 aa).

Thr58, Lys60, Glu85, Asn89, Thr96, and Lys194 together coordinate a 1,2-diacyl-sn-glycero-3-phospho-(1D-myo-inositol). Lys215 carries the N6-acetyllysine modification. Basic and acidic residues predominate over residues 250-263; it reads TKRQLDEMRQKDPV. The tract at residues 250 to 270 is disordered; the sequence is TKRQLDEMRQKDPVKGMTADD.

This sequence belongs to the PtdIns transfer protein family. PI transfer class I subfamily. Phosphorylated by PKC in a calcium and phosphatidylserine-dependent manner.

It is found in the cytoplasm. Its subcellular location is the nucleus. It carries out the reaction a 1,2-diacyl-sn-glycero-3-phosphocholine(in) = a 1,2-diacyl-sn-glycero-3-phosphocholine(out). It catalyses the reaction a 1,2-diacyl-sn-glycero-3-phospho-(1D-myo-inositol)(in) = a 1,2-diacyl-sn-glycero-3-phospho-(1D-myo-inositol)(out). Its function is as follows. Catalyzes the transfer of phosphatidylinositol (PI) and phosphatidylcholine (PC) between membranes. Shows a preference for PI and PC containing shorter saturated or monosaturated acyl chains at the sn-1 and sn-2 positions. Preference order for PC is C16:1 &gt; C16:0 &gt; C18:1 &gt; C18:0 &gt; C20:4 and for PI is C16:1 &gt; C16:0 &gt; C18:1 &gt; C18:0 &gt; C20:4 &gt; C20:3. The polypeptide is Phosphatidylinositol transfer protein alpha isoform (PITPNA) (Oryctolagus cuniculus (Rabbit)).